The following is a 160-amino-acid chain: Ribosomal RNA large subunit methyltransferase H (160 aa).

Residues Leu77, Gly109, and 128–133 contribute to the S-adenosyl-L-methionine site; that span reads FGRITL.

The protein belongs to the RNA methyltransferase RlmH family. Homodimer.

It is found in the cytoplasm. It catalyses the reaction pseudouridine(1915) in 23S rRNA + S-adenosyl-L-methionine = N(3)-methylpseudouridine(1915) in 23S rRNA + S-adenosyl-L-homocysteine + H(+). In terms of biological role, specifically methylates the pseudouridine at position 1915 (m3Psi1915) in 23S rRNA. In Oenococcus oeni (strain ATCC BAA-331 / PSU-1), this protein is Ribosomal RNA large subunit methyltransferase H.